We begin with the raw amino-acid sequence, 459 residues long: UDP-N-acetylmuramate--L-alanine ligase (459 aa).

113–119 (GSHGKTT) serves as a coordination point for ATP.

It belongs to the MurCDEF family.

It localises to the cytoplasm. It catalyses the reaction UDP-N-acetyl-alpha-D-muramate + L-alanine + ATP = UDP-N-acetyl-alpha-D-muramoyl-L-alanine + ADP + phosphate + H(+). Its pathway is cell wall biogenesis; peptidoglycan biosynthesis. In terms of biological role, cell wall formation. The polypeptide is UDP-N-acetylmuramate--L-alanine ligase (Persephonella marina (strain DSM 14350 / EX-H1)).